The chain runs to 438 residues: Myosin light chain kinase, smooth muscle (438 aa).

The 241-residue stretch at 1-241 (FRLVEKKTGK…CTQCLQHPWL (241 aa)) folds into the Protein kinase domain. Residue lysine 15 coordinates ATP. Residue tyrosine 97 is modified to Phosphotyrosine; by ABL1. Residue aspartate 107 is the Proton acceptor of the active site. Position 157 is a phosphotyrosine; by ABL1 (tyrosine 157). A calmodulin-binding region spans residues 233–296 (TQCLQHPWLX…SGLSGRKSST (64 aa)). Serine 281, serine 282, serine 294, serine 295, and serine 298 each carry phosphoserine. The interval 283 to 438 (MAMISGLSGR…GEGGEEEEEE (156 aa)) is telokin. Residues 289-309 (LSGRKSSTGSPTSPLNAEKLE) form a disordered region. Over residues 292–303 (RKSSTGSPTSPL) the composition is skewed to polar residues. Threonine 300 bears the Phosphothreonine mark. Serine 301 carries the post-translational modification Phosphoserine. The 90-residue stretch at 331–420 (PYFSKTIRDL…GEATCTAELI (90 aa)) folds into the Ig-like C2-type domain. Residues cysteine 352 and cysteine 404 are joined by a disulfide bond.

This sequence belongs to the protein kinase superfamily. CAMK Ser/Thr protein kinase family. All isoforms including Telokin bind calmodulin. Interacts with SVIL. Interacts with CTTN; this interaction is reduced during thrombin-induced endothelial cell (EC) contraction but is promoted by the barrier-protective agonist sphingosine 1-phosphate (S1P) within lamellipodia. A complex made of ABL1, CTTN and MYLK regulates cortical actin-based cytoskeletal rearrangement critical to sphingosine 1-phosphate (S1P)-mediated endothelial cell (EC) barrier enhancement. Binds to NAA10/ARD1 and PTK2B/PYK2. Mg(2+) serves as cofactor. The cofactor is Ca(2+). In terms of processing, the C-terminus is deglutamylated by AGTPBP1/CCP1, AGBL1/CCP4 and AGBL4/CCP6, leading to the formation of Myosin light chain kinase, smooth muscle, deglutamylated form. The consequences of C-terminal deglutamylation are unknown. Can probably be down-regulated by phosphorylation. Tyrosine phosphorylation by ABL1 increases kinase activity, reverses MLCK-mediated inhibition of Arp2/3-mediated actin polymerization, and enhances CTTN-binding. Phosphorylation by SRC promotes CTTN binding.

The protein localises to the cytoplasm. It is found in the cell projection. It localises to the lamellipodium. The protein resides in the cleavage furrow. Its subcellular location is the cytoskeleton. The protein localises to the stress fiber. The catalysed reaction is L-seryl-[myosin light chain] + ATP = O-phospho-L-seryl-[myosin light chain] + ADP + H(+). It carries out the reaction L-threonyl-[myosin light chain] + ATP = O-phospho-L-threonyl-[myosin light chain] + ADP + H(+). In terms of biological role, calcium/calmodulin-dependent myosin light chain kinase implicated in smooth muscle contraction via phosphorylation of myosin light chains (MLC). Also regulates actin-myosin interaction through a non-kinase activity. Phosphorylates PTK2B/PYK2 and myosin light-chains. Involved in the inflammatory response (e.g. apoptosis, vascular permeability, leukocyte diapedesis), cell motility and morphology, airway hyperreactivity and other activities relevant to asthma. Required for tonic airway smooth muscle contraction that is necessary for physiological and asthmatic airway resistance. Necessary for gastrointestinal motility. Implicated in the regulation of endothelial as well as vascular permeability, probably via the regulation of cytoskeletal rearrangements. In the nervous system it has been shown to control the growth initiation of astrocytic processes in culture and to participate in transmitter release at synapses formed between cultured sympathetic ganglion cells. Critical participant in signaling sequences that result in fibroblast apoptosis. Plays a role in the regulation of epithelial cell survival. Required for epithelial wound healing, especially during actomyosin ring contraction during purse-string wound closure. Mediates RhoA-dependent membrane blebbing. Triggers TRPC5 channel activity in a calcium-dependent signaling, by inducing its subcellular localization at the plasma membrane. Promotes cell migration (including tumor cells) and tumor metastasis. PTK2B/PYK2 activation by phosphorylation mediates ITGB2 activation and is thus essential to trigger neutrophil transmigration during acute lung injury (ALI). May regulate optic nerve head astrocyte migration. Probably involved in mitotic cytoskeletal regulation. Regulates tight junction probably by modulating ZO-1 exchange in the perijunctional actomyosin ring. Mediates burn-induced microvascular barrier injury; triggers endothelial contraction in the development of microvascular hyperpermeability by phosphorylating MLC. Essential for intestinal barrier dysfunction. Mediates Giardia spp.-mediated reduced epithelial barrier function during giardiasis intestinal infection via reorganization of cytoskeletal F-actin and tight junctional ZO-1. Necessary for hypotonicity-induced Ca(2+) entry and subsequent activation of volume-sensitive organic osmolyte/anion channels (VSOAC) in cervical cancer cells. The polypeptide is Myosin light chain kinase, smooth muscle (MYLK) (Ovis aries (Sheep)).